A 748-amino-acid chain; its full sequence is Ribonucleoprotein PTB-binding 1 (748 aa).

The segment at 1 to 42 is disordered; sequence MAADVSVTHRPPLSPEAEAEAETPETVDRRTPEQELPPLDPE. Alanine 2 bears the N-acetylalanine mark. 2 positions are modified to phosphoserine: serine 6 and serine 14. Threonine 31 is modified (phosphothreonine). The Nuclear localization signal motif lies at 45-60; the sequence is RKRLEHTERQFRNRRK. RRM domains follow at residues 59–130, 132–210, and 221–299; these read RKIL…LQPT, ALLC…WTDA, and RCLC…FCAP. The interval 307–401 is interaction with PTBP1; it reads LAALIAAQAT…QSQSQKKPGI (95 aa). 3 disordered regions span residues 390–505, 525–647, and 672–731; these read QSQS…GEPP, SNLA…PLSH, and KAVG…QHSQ. Position 469 is a phosphothreonine (threonine 469). A phosphoserine mark is found at serine 480, serine 576, serine 626, and serine 630. The span at 675–685 shows a compositional bias: low complexity; that stretch reads GSSPMGSSEGL. 2 positions are modified to phosphoserine: serine 716 and serine 720. The Nuclear localization signal motif lies at 743–746; it reads KRKR.

Interacts with PTBP1, RAVER2, VCL and ACTN1. Part of a complex containing RAVER1, VCL and ACTN1. As to expression, ubiquitous. Detected in aorta, brain, gut, heart, kidney, liver, spleen, uterus and skeletal muscle.

The protein localises to the nucleus. It is found in the cytoplasm. Cooperates with PTBP1 to modulate regulated alternative splicing events. Promotes exon skipping. Cooperates with PTBP1 to modulate switching between mutually exclusive exons during maturation of the TPM1 pre-mRNA. The chain is Ribonucleoprotein PTB-binding 1 (Raver1) from Rattus norvegicus (Rat).